Reading from the N-terminus, the 268-residue chain is MGRGKIEIKRIENANSRQVTFSKRRSGLLKKARELSVLCDAEVAVIVFSKSGKLFEYSSTGMKQTLSRYGNHQSSSASKAEEDCAEVDILKDQLSKLQEKHLQLQGKGLNPLTFKELQSLEQQLYHALITVRERKERLLTNQLEESRLKEQRAELENETLRRQVQELRSFLPSFTHYVPSYIKCFAIDPKNALINHDSKCSLQNTDSDTTLQLGLPGEAHDRRTNEGERESPSSDSVTTNTSSETAERGDQSSLANSPPEAKRQRFSV.

An MADS-box domain is found at 1–61; it reads MGRGKIEIKR…GKLFEYSSTG (61 aa). The K-box domain occupies 80–170; that stretch reads AEEDCAEVDI…RRQVQELRSF (91 aa). The segment at 205–268 is disordered; sequence TDSDTTLQLG…PEAKRQRFSV (64 aa). The span at 218-232 shows a compositional bias: basic and acidic residues; the sequence is EAHDRRTNEGERESP. Residues 233 to 244 show a composition bias toward polar residues; sequence SSDSVTTNTSSE.

As to quaternary structure, homodimer. Interacts with SVP, AGL24, AP1, AGL6, AG, AGL1, AGL11, AGL5, AGL16, SOC1 and AGL21. Expressed at low levels in flowers and siliques. Also present in seedlings. Detected during embryogenesis and accumulates during early seed development (at protein level). Expressed in shoot apices and the base of leaf petioles.

Its subcellular location is the nucleus. It is found in the cytoplasm. Functionally, transcription factor involved in the negative regulation of flowering, probably through the photoperiodic pathway. Acts both as an activator and as a repressor of transcription. Binds DNA in a sequence-specific manner in large CArG motif 5'-CC (A/T)8 GG-3'. Participates probably in the regulation of programs active during the early stages of embryo development. Prevents premature perianth senescence and abscission, fruits development and seed desiccation. Stimulates the expression of at least DTA4, LEC2, FUS3, ABI3, AT4G38680/CSP2 and GRP2B/CSP4. Can enhance somatic embryo development in vitro. The protein is Agamous-like MADS-box protein AGL15 (AGL15) of Arabidopsis thaliana (Mouse-ear cress).